The sequence spans 569 residues: Carboxylesterase 3 (569 aa).

A signal peptide spans 1–24 (MRLHRLRARLNAVAFGLLLLLVHG). Cys95 and Cys122 are oxidised to a cystine. The N-linked (GlcNAc...) asparagine glycan is linked to Asn103. Ser227 serves as the catalytic Acyl-ester intermediate. Cys279 and Cys290 are oxidised to a cystine. Active-site charge relay system residues include Glu345 and His458. The Prevents secretion from ER motif lies at 566 to 569 (QEDL).

This sequence belongs to the type-B carboxylesterase/lipase family. In terms of processing, N-glycosylated.

It is found in the endoplasmic reticulum lumen. The enzyme catalyses a carboxylic ester + H2O = an alcohol + a carboxylate + H(+). In terms of biological role, involved in the detoxification of xenobiotics and in the activation of ester and amide prodrugs. This chain is Carboxylesterase 3 (CES3), found in Pongo abelii (Sumatran orangutan).